A 329-amino-acid chain; its full sequence is UPF0158 protein CT_429 (329 aa).

The segment at Gly-292 to Ser-329 is disordered. Acidic residues predominate over residues Ser-295–Glu-313. Over residues Lys-317–Ser-329 the composition is skewed to basic residues.

This sequence belongs to the UPF0158 family.

This chain is UPF0158 protein CT_429, found in Chlamydia trachomatis serovar D (strain ATCC VR-885 / DSM 19411 / UW-3/Cx).